The following is a 149-amino-acid chain: Large ribosomal subunit protein bL9 (149 aa).

The protein belongs to the bacterial ribosomal protein bL9 family.

Binds to the 23S rRNA. The chain is Large ribosomal subunit protein bL9 from Amoebophilus asiaticus (strain 5a2).